Consider the following 169-residue polypeptide: Protein ORFb in retron Ec67 (169 aa).

The protein is Protein ORFb in retron Ec67 of Escherichia coli.